The following is a 105-amino-acid chain: MAKIKKGDQVIVIAGKEKGKQGTVLSVSEDRVKVEGLNLVKKHQKPNRVTGAEGGIVTQEASLHISNVAILNATTQKADRVGYQVIDGVKTRVYKSTGESVAVAK.

It belongs to the universal ribosomal protein uL24 family. Part of the 50S ribosomal subunit.

Its function is as follows. One of two assembly initiator proteins, it binds directly to the 5'-end of the 23S rRNA, where it nucleates assembly of the 50S subunit. In terms of biological role, one of the proteins that surrounds the polypeptide exit tunnel on the outside of the subunit. This Acinetobacter baumannii (strain AB307-0294) protein is Large ribosomal subunit protein uL24.